The chain runs to 135 residues: uncharacterized protein (135 aa).

Residues 4-129 (SIVHIALVVN…YGNLWDLLQL (126 aa)) form the VOC domain.

This sequence to B.subtilis YwkD.

This is an uncharacterized protein from Shewanella frigidimarina (strain NCIMB 400).